A 365-amino-acid chain; its full sequence is Cobalt-precorrin-5B C(1)-methyltransferase (365 aa).

This sequence belongs to the CbiD family.

The catalysed reaction is Co-precorrin-5B + S-adenosyl-L-methionine = Co-precorrin-6A + S-adenosyl-L-homocysteine. It participates in cofactor biosynthesis; adenosylcobalamin biosynthesis; cob(II)yrinate a,c-diamide from sirohydrochlorin (anaerobic route): step 6/10. Catalyzes the methylation of C-1 in cobalt-precorrin-5B to form cobalt-precorrin-6A. This is Cobalt-precorrin-5B C(1)-methyltransferase from Polaromonas naphthalenivorans (strain CJ2).